A 683-amino-acid polypeptide reads, in one-letter code: Methionine--tRNA ligase (683 aa).

Residues 15 to 25 (YYPSGKLHIGN) carry the 'HIGH' region motif. The 'KMSKS' region signature appears at 311–315 (KMSKS). An ATP-binding site is contributed by lysine 314. One can recognise a tRNA-binding domain in the interval 581–683 (DFDKVELKVA…DNMVNGSLIS (103 aa)).

It belongs to the class-I aminoacyl-tRNA synthetase family. MetG type 2B subfamily. As to quaternary structure, homodimer.

The protein resides in the cytoplasm. The enzyme catalyses tRNA(Met) + L-methionine + ATP = L-methionyl-tRNA(Met) + AMP + diphosphate. Its function is as follows. Is required not only for elongation of protein synthesis but also for the initiation of all mRNA translation through initiator tRNA(fMet) aminoacylation. In Lactiplantibacillus plantarum (strain ATCC BAA-793 / NCIMB 8826 / WCFS1) (Lactobacillus plantarum), this protein is Methionine--tRNA ligase.